The following is a 187-amino-acid chain: dCTP deaminase, dUMP-forming (187 aa).

Residues 99-104 (KSSIAR), aspartate 117, 125-127 (TLE), glutamine 146, tyrosine 159, lysine 166, and glutamine 170 each bind dCTP. Catalysis depends on glutamate 127, which acts as the Proton donor/acceptor.

It belongs to the dCTP deaminase family. In terms of assembly, homotrimer.

It carries out the reaction dCTP + 2 H2O = dUMP + NH4(+) + diphosphate. It participates in pyrimidine metabolism; dUMP biosynthesis; dUMP from dCTP: step 1/1. Functionally, bifunctional enzyme that catalyzes both the deamination of dCTP to dUTP and the hydrolysis of dUTP to dUMP without releasing the toxic dUTP intermediate. This is dCTP deaminase, dUMP-forming from Methanoculleus marisnigri (strain ATCC 35101 / DSM 1498 / JR1).